The sequence spans 1759 residues: Histone-lysine N-methyltransferase ASHH2 (1759 aa).

Composition is skewed to basic and acidic residues over residues 154-165 (QEKEAPQAKEDE), 197-206 (ETTKHIKPDE), and 215-224 (RFDDGGKEGR). Disordered regions lie at residues 154–181 (QEKEAPQAKEDEGYGGTTLPIGGSGIDT), 197–237 (ETTK…GSSD), 437–482 (CEAG…IESI), 515–556 (SNNI…NRNI), and 738–816 (DELR…VGRI). Over residues 462–472 (SARHLRKSSRK) the composition is skewed to basic residues. The span at 530 to 556 (RSQGNLNNGEHNRSSHNGNVEGSNRNI) shows a compositional bias: polar residues. The span at 758–775 (KKAKHPKSKSNGTKKGKS) shows a compositional bias: basic residues. Basic and acidic residues-rich tracts occupy residues 776–797 (KFSESAKDGRKNESHEGVEQRK) and 804–816 (GRDDSDYPEVGRI). Residues 859-912 (YSTESAWVRCDDCFKWRRIPASVVGSIDESSRWICMNNSDKRFADCSKSQEMSN) form a CW-type zinc finger. 4 residues coordinate Zn(2+): C868, C871, C893, and C904. One can recognise an AWS domain in the interval 974–1024 (DEIMVCHCKPSPDGRLGCGEECLNRMLNIECLQGTCPAGDLCSNQQFQKRK). One can recognise an SET domain in the interval 1026–1143 (VKFERFQSGK…KGQELTFDYN (118 aa)). S-adenosyl-L-methionine is bound at residue Y1142. A Post-SET domain is found at 1151-1167 (AAKKCYCGSSHCRGYIG). 4 disordered regions span residues 1225 to 1253 (GYKDLAPDNTQTQSSVSVKLPEREIPPPL), 1271 to 1345 (AVQQ…PGVN), 1496 to 1606 (ERSE…FSSP), and 1727 to 1759 (KQSVPPWLRNNGGEKTANSPIPGNLTLEKKLNS). The segment covering 1232–1241 (DNTQTQSSVS) has biased composition (polar residues). Residues 1284-1293 (STSPTSSSLS) show a composition bias toward low complexity. Positions 1304–1316 (KTTKHGSGEDKKI) are enriched in basic and acidic residues. Residues 1317 to 1326 (LPRPRPRMKT) are compositionally biased toward basic residues. A compositionally biased stretch (basic and acidic residues) spans 1511–1521 (ASQEPRYDHQS). Residues 1530–1556 (SVTSSKAATPETASVSEGYSEPNSGLP) are compositionally biased toward polar residues. The span at 1566–1577 (RWDQPSKTKEQR) shows a compositional bias: basic and acidic residues. A compositionally biased stretch (polar residues) spans 1581-1594 (ILSQQTDETNGNQD).

It belongs to the class V-like SAM-binding methyltransferase superfamily. Histone-lysine methyltransferase family. SET2 subfamily. In terms of assembly, interacts with FRI and SUF4, two components of the transcription activator complex FRI-C, and with SWC6, a component of the SWR1 chromatin-remodeling complex. Interacts with BZR2/BES1 and IWS1. Ubiquitous, with higher levels in young tissues, including shoot and root apex. Expressed in ovules, tapetum layer and microspores.

It is found in the nucleus. Its subcellular location is the chromosome. It localises to the centromere. It carries out the reaction N(6)-methyl-L-lysyl(36)-[histone H3] + S-adenosyl-L-methionine = N(6),N(6)-dimethyl-L-lysyl(36)-[histone H3] + S-adenosyl-L-homocysteine + H(+). It catalyses the reaction N(6),N(6)-dimethyl-L-lysyl(36)-[histone H3] + S-adenosyl-L-methionine = N(6),N(6),N(6)-trimethyl-L-lysyl(36)-[histone H3] + S-adenosyl-L-homocysteine + H(+). Histone methyltransferase involved in di and tri-methylation of 'Lys-36' of histone H3 (H3K36me2 and H3K36me3). Binds to H3 already mono- or di-methylated on 'Lys-4'(H3K4me1 or H3K4me2), but not to H3K4me3. H3K4me and H3K36me represent specific tags for epigenetic transcriptional activation. Positively regulates FLC transcription to prevent early flowering transition. Required for flowering transition in response to vernalization and for the maintenance of FLC expression in late embryos, but dispensable for the initial reactivation in early embryos during reprogramming. Also seems to modulate several traits including floral organ size, root size and dormancy. Promotes apical dominance. Directly involved in the tri-methylation of 'Lys-36' of histone H3 (H3K36me3) at LAZ5 chromatin to maintain a transcriptionally active state of LAZ5, a TIR-NB-LRR protein involved in innate immunity. Required for brassinosteroid (BR)-induced gene expression and histone H3 trimethylation on 'Lys-36' (H3K36me3) in BR-regulated genes. This is Histone-lysine N-methyltransferase ASHH2 from Arabidopsis thaliana (Mouse-ear cress).